Reading from the N-terminus, the 454-residue chain is Probable spastin homolog Bm1_53365 (454 aa).

An ATP-binding site is contributed by 218 to 225; that stretch reads GPPGNGKT.

Belongs to the AAA ATPase family. Spastin subfamily. Homohexamer. The homohexamer is stabilized by ATP-binding. The homohexamer may adopt a ring conformation through which microtubules pass prior to being severed. Interacts with microtubules.

Its subcellular location is the cytoplasm. It is found in the cytoskeleton. The protein resides in the perinuclear region. It carries out the reaction n ATP + n H2O + a microtubule = n ADP + n phosphate + (n+1) alpha/beta tubulin heterodimers.. Functionally, severs microtubules, probably in an ATP-dependent fashion. The chain is Probable spastin homolog Bm1_53365 from Brugia malayi (Filarial nematode worm).